The sequence spans 290 residues: Small ribosomal subunit protein uS2 (290 aa).

The tract at residues 269–290 (WEAEASGDWAAESAQPNPETKW) is disordered.

The protein belongs to the universal ribosomal protein uS2 family. Component of the small ribosomal subunit. Mature ribosomes consist of a small (40S) and a large (60S) subunit. The 40S subunit contains about 33 different proteins and 1 molecule of RNA (18S). The 60S subunit contains about 49 different proteins and 3 molecules of RNA (25S, 5.8S and 5S). Interacts with rps21.

The protein resides in the cytoplasm. Functionally, required for the assembly and/or stability of the 40S ribosomal subunit. Required for the processing of the 20S rRNA-precursor to mature 18S rRNA in a late step of the maturation of 40S ribosomal subunits. This Talaromyces marneffei (strain ATCC 18224 / CBS 334.59 / QM 7333) (Penicillium marneffei) protein is Small ribosomal subunit protein uS2 (rps0).